A 318-amino-acid chain; its full sequence is Biotin synthase (318 aa).

Residues 44-273 (LCGNKFDLCT…TVQIRLAGGR (230 aa)) enclose the Radical SAM core domain. [4Fe-4S] cluster is bound by residues cysteine 62, cysteine 66, and cysteine 69. [2Fe-2S] cluster contacts are provided by serine 106, cysteine 138, cysteine 198, and arginine 268.

It belongs to the radical SAM superfamily. Biotin synthase family. As to quaternary structure, homodimer. It depends on [4Fe-4S] cluster as a cofactor. [2Fe-2S] cluster is required as a cofactor.

It catalyses the reaction (4R,5S)-dethiobiotin + (sulfur carrier)-SH + 2 reduced [2Fe-2S]-[ferredoxin] + 2 S-adenosyl-L-methionine = (sulfur carrier)-H + biotin + 2 5'-deoxyadenosine + 2 L-methionine + 2 oxidized [2Fe-2S]-[ferredoxin]. It functions in the pathway cofactor biosynthesis; biotin biosynthesis; biotin from 7,8-diaminononanoate: step 2/2. Functionally, catalyzes the conversion of dethiobiotin (DTB) to biotin by the insertion of a sulfur atom into dethiobiotin via a radical-based mechanism. This is Biotin synthase from Clostridium botulinum (strain Loch Maree / Type A3).